The chain runs to 212 residues: Ribonuclease HII (212 aa).

The region spanning 1-199 (MIGGIDEAGR…VGGRIGLGRN (199 aa)) is the RNase H type-2 domain. A divalent metal cation-binding residues include aspartate 6, glutamate 7, and aspartate 101.

The protein belongs to the RNase HII family. The cofactor is Mn(2+). Mg(2+) is required as a cofactor.

It is found in the cytoplasm. It catalyses the reaction Endonucleolytic cleavage to 5'-phosphomonoester.. Endonuclease that specifically degrades the RNA of RNA-DNA hybrids. This is Ribonuclease HII from Pyrobaculum aerophilum (strain ATCC 51768 / DSM 7523 / JCM 9630 / CIP 104966 / NBRC 100827 / IM2).